Consider the following 354-residue polypeptide: Thiamine thiazole synthase 1, chloroplastic (354 aa).

The transit peptide at 1–45 directs the protein to the chloroplast; the sequence is MATAAASSLLKSSFAGSRLPAATRTTPASLVVATGPRGAGAGPIC. Substrate contacts are provided by residues Ala100, 120-121, Gly128, and Val193; that span reads EQ. Cys222 is subject to 2,3-didehydroalanine (Cys). Substrate-binding positions include Asp224, His239, Met291, and 301–303; that span reads RMG.

It belongs to the THI4 family. As to quaternary structure, homooctamer. It depends on Fe cation as a cofactor. During the catalytic reaction, a sulfide is transferred from Cys-222 to a reaction intermediate, generating a dehydroalanine residue. Highest expression in developing embryos and green leaves and a very low level expression seen in endosperm, roots, etiolated shoots and immature ears.

The protein resides in the plastid. It is found in the chloroplast. It catalyses the reaction [ADP-thiazole synthase]-L-cysteine + glycine + NAD(+) = [ADP-thiazole synthase]-dehydroalanine + ADP-5-ethyl-4-methylthiazole-2-carboxylate + nicotinamide + 3 H2O + 2 H(+). Its function is as follows. Involved in biosynthesis of the thiamine precursor thiazole. Catalyzes the conversion of NAD and glycine to adenosine diphosphate 5-(2-hydroxyethyl)-4-methylthiazole-2-carboxylic acid (ADT), an adenylated thiazole intermediate. The reaction includes an iron-dependent sulfide transfer from a conserved cysteine residue of the protein to a thiazole intermediate. The enzyme can only undergo a single turnover, which suggests it is a suicide enzyme. May have additional roles in adaptation to various stress conditions and in DNA damage tolerance. This Zea mays (Maize) protein is Thiamine thiazole synthase 1, chloroplastic.